Reading from the N-terminus, the 192-residue chain is Peptidyl-tRNA hydrolase (192 aa).

Tyrosine 17 lines the tRNA pocket. Residue histidine 22 is the Proton acceptor of the active site. Residues tyrosine 68, asparagine 70, and asparagine 116 each coordinate tRNA.

Belongs to the PTH family. In terms of assembly, monomer.

Its subcellular location is the cytoplasm. The catalysed reaction is an N-acyl-L-alpha-aminoacyl-tRNA + H2O = an N-acyl-L-amino acid + a tRNA + H(+). Its function is as follows. Hydrolyzes ribosome-free peptidyl-tRNAs (with 1 or more amino acids incorporated), which drop off the ribosome during protein synthesis, or as a result of ribosome stalling. Catalyzes the release of premature peptidyl moieties from peptidyl-tRNA molecules trapped in stalled 50S ribosomal subunits, and thus maintains levels of free tRNAs and 50S ribosomes. The polypeptide is Peptidyl-tRNA hydrolase (Mycolicibacterium vanbaalenii (strain DSM 7251 / JCM 13017 / BCRC 16820 / KCTC 9966 / NRRL B-24157 / PYR-1) (Mycobacterium vanbaalenii)).